Consider the following 636-residue polypeptide: MDGFYPTNLKNAVIYAALILILLFVYGIFGSIYIMHLGVIDAIYYTITTVTTTGFGDIRPITPSQKLFTASLELIGAGFLLYIFTLMLSVMFMSFSEYVTGAKLKRKIASMKNHFILCGFGRVGSTAFKELKKRKQKVVIIEKNKDLVETELWSDPNIIAIPGDATKENVLRYAGIERAKCIIIATGSDVDNLFITIEAKELNPKIWIVARASERENISRLKKAGANRIISPEFSGGKDIYFAAMEPLMMKITVKHGMESIKREAEIIFKHNCTLENIMYHLPEFREPLKRKIEVSDLDHIEKFLFQVKKNPRLRESLNKMYESTSGVHSHWISGPSKENLEKVVEDLKKEGILLGVNLDDEKIKEITRKYGMLAEVMVKPEITVVNKHGIDEIRDEAEIILKHGCTIEDIEYYIPGFREPLKRHVGADSIEDIDKFLNTLKKDPKKYDAIDRLYMLSGGGIHSHVISARSLESLNKVEKELKEKGFLIGVNMSLGEIKEMIQKSGTVVDILVQHDVKNLEDKKTVVKYGGRILTSKHYLPGIRYVLTRKLNLKTMEDVKKCEKELEKPRARRTLTALYELSANIHSHTIVTPSAEITKKIEEELKEKGILLGVNFPEEKIWEMVEKEAVEPFCVD.

Helical transmembrane passes span Ala-12–Ile-32, Ile-34–Gly-54, and Ile-75–Phe-95. Residues Lys-112–Ser-231 form the RCK N-terminal domain.

Its subcellular location is the cell membrane. This is an uncharacterized protein from Methanothermus fervidus (strain ATCC 43054 / DSM 2088 / JCM 10308 / V24 S).